The chain runs to 149 residues: Probable calcium-binding protein CML25/26 (149 aa).

4 consecutive EF-hand domains span residues 1–35 (MASSASSVFAAFDKDGDGKVSASELRGCMAAALGE), 37–72 (VSEEEAAAILATADTDGDGLLDHHEFMRLSAAHQLQ), 77–113 (ESLRCLREAFDMYAEEEETAVITPASLRRMLRRLGSE), and 117–149 (LEMEECRAMICRFDLNGDGVLSFDEFRVMMLMA). Residues aspartate 13, aspartate 15, aspartate 17, lysine 19, glutamate 24, aspartate 50, aspartate 52, aspartate 54, and glutamate 61 each coordinate Ca(2+). The Ca(2+) site is built by aspartate 130, asparagine 132, aspartate 134, and glutamate 141.

Its function is as follows. Potential calcium sensor. In Oryza sativa subsp. japonica (Rice), this protein is Probable calcium-binding protein CML25/26 (CML25).